Consider the following 833-residue polypeptide: MAHSACGFSVALLGALLLGTARLLRGTEASEIALPQRSGVTVSIKLGNPALPVKICYIVMSRQHITELIIRPGERKSFTFSCSNPEKHFVLKIEKNIDCMSGPCPFGEVHLQPSTSELPILNRTFIWDVRAHKSIGLELQFATPRLRQIGPGESCADGVTHSISGHIDATEVRIGTFCSNGTVSRIKMQEGVKMALHLPWFHRRNVSGFSIANRSSIKRLCIIESVFEGEGSATLMSANYPGGFPEDELMTWQFVVPAHLRASVSFLNFNVSNCERKEERVEYYIPGSTTNPEVFRLEDKQPGNMAGNFNLSLQGCDQDAQSPGILRLQFQVLVQRPQDESNKTYMVDLSRERTMSLTIEPRPVKHGRRFVPGCFVCLESRTCSTNVTLTAGSIHKISFLCDDLTRLWVNVEKTLSCLDHRYCYRQSFKLQVPDYILQLPVQLHDFSWKLLVPKDKLSLMLVPGQKLQQHTQERPCNTSFGYHVTSTTPGQDLYFGSFCSGGSIEKIQVKQNSSVTLRAYAPSFQQEVSKQGLIVSYTPYFKEEGIFTVTPDTKNKVYLRSPNWDRGLPALSSVSWNISVPSNQVACLTVLKERSGLACQSGRAFMIIQEQQSRAEEIFSLEEEVLPKPSFHHHSFWVNISNCSPMNGKQLDLLFWVTLTPRTVDLAVVIGAAGGGALLLFALVLIICFVKKKKKVDKGPAVGIYNGNVNTQMPQTQKFPKGRKDNDSHVYAVIEDTMVYGHLLQDSGGSFIQPEVDTYRPFQGPMGDCPPTPPPLFSRTPTAKFTAEELAPSSPPESESEPYTFSHPNKGEIGVRETDIPLLHTQGPVETEE.

The first 29 residues, 1–29 (MAHSACGFSVALLGALLLGTARLLRGTEA), serve as a signal peptide directing secretion. At 30–666 (SEIALPQRSG…VTLTPRTVDL (637 aa)) the chain is on the extracellular side. Residues Asn-122, Asn-180, Asn-205, Asn-270, Asn-310, Asn-342, and Asn-386 are each glycosylated (N-linked (GlcNAc...) asparagine). The region spanning 417–540 (CLDHRYCYRQ…QGLIVSYTPY (124 aa)) is the CUB domain. A disulfide bridge connects residues Cys-476 and Cys-499. The chain crosses the membrane as a helical span at residues 667–687 (AVVIGAAGGGALLLFALVLII). At 688 to 833 (CFVKKKKKVD…HTQGPVETEE (146 aa)) the chain is on the cytoplasmic side. Tyr-731 carries the phosphotyrosine modification. The segment at 783–833 (AKFTAEELAPSSPPESESEPYTFSHPNKGEIGVRETDIPLLHTQGPVETEE) is disordered. The span at 809–819 (NKGEIGVRETD) shows a compositional bias: basic and acidic residues.

As to quaternary structure, interacts with CDH2/N-cadherin, CDH3/P-cadherin, SDC1/syndecan-1, SDC4/syndecan-4 and the serine protease ST14/MT-SP1. Also interacts SRC and PRKCG/protein kinase C gamma. In terms of processing, phosphorylated on tyrosine by kinases of the SRC family such as SRC and YES as well as by the protein kinase C gamma/PRKCG. Dephosphorylated by phosphotyrosine phosphatases. Also phosphorylated by suramin, a heparin analog. Tyrosine phosphorylated in response to dissociation of integrin alpha-6 beta-4 from laminin-5. N-glycosylated. Post-translationally, a soluble form may also be produced by proteolytic cleavage at the cell surface (shedding). Another peptide of 80 kDa (p80) is present in cultured keratinocytes probably due to tryptic cleavage at an unidentified site on the N-terminal side. Converted to p80 by plasmin, a trypsin-like protease.

The protein resides in the cell membrane. In terms of biological role, may be involved in cell adhesion and cell matrix association. May play a role in the regulation of anchorage versus migration or proliferation versus differentiation via its phosphorylation. May be a novel marker for leukemia diagnosis and for immature hematopoietic stem cell subsets. Belongs to the tetraspanin web involved in tumor progression and metastasis. This is CUB domain-containing protein 1 (Cdcp1) from Mus musculus (Mouse).